The chain runs to 299 residues: ATP phosphoribosyltransferase (299 aa).

This sequence belongs to the ATP phosphoribosyltransferase family. Long subfamily. Requires Mg(2+) as cofactor.

Its subcellular location is the cytoplasm. The catalysed reaction is 1-(5-phospho-beta-D-ribosyl)-ATP + diphosphate = 5-phospho-alpha-D-ribose 1-diphosphate + ATP. It participates in amino-acid biosynthesis; L-histidine biosynthesis; L-histidine from 5-phospho-alpha-D-ribose 1-diphosphate: step 1/9. Its activity is regulated as follows. Feedback inhibited by histidine. Catalyzes the condensation of ATP and 5-phosphoribose 1-diphosphate to form N'-(5'-phosphoribosyl)-ATP (PR-ATP). Has a crucial role in the pathway because the rate of histidine biosynthesis seems to be controlled primarily by regulation of HisG enzymatic activity. This chain is ATP phosphoribosyltransferase (hisG), found in Pasteurella multocida (strain Pm70).